The sequence spans 423 residues: Gamma-glutamyl phosphate reductase (423 aa).

Over residues 1-14 the composition is skewed to low complexity; that stretch reads MTLQAAPRSAAAQQ. Residues 1-25 are disordered; that stretch reads MTLQAAPRSAAAQQREPDLRQEVHD. The segment covering 15–25 has biased composition (basic and acidic residues); it reads REPDLRQEVHD.

This sequence belongs to the gamma-glutamyl phosphate reductase family.

It localises to the cytoplasm. The enzyme catalyses L-glutamate 5-semialdehyde + phosphate + NADP(+) = L-glutamyl 5-phosphate + NADPH + H(+). The protein operates within amino-acid biosynthesis; L-proline biosynthesis; L-glutamate 5-semialdehyde from L-glutamate: step 2/2. Its function is as follows. Catalyzes the NADPH-dependent reduction of L-glutamate 5-phosphate into L-glutamate 5-semialdehyde and phosphate. The product spontaneously undergoes cyclization to form 1-pyrroline-5-carboxylate. This Mycobacterium marinum (strain ATCC BAA-535 / M) protein is Gamma-glutamyl phosphate reductase.